Reading from the N-terminus, the 632-residue chain is Probable potassium transport system protein Kup (632 aa).

A run of 12 helical transmembrane segments spans residues 19–39, 59–79, 110–130, 146–166, 178–198, 221–241, 256–276, 298–318, 346–366, 375–395, 403–423, and 428–448; these read LVVGAIGVVFGDIGTSPLYSL, IISMLFWAFVIVVSLKYVMFV, LIMMFGIFGACMFYGDAVITP, PGLSHFVIPITLLILALLFFI, FGPIMVVWFLALGALGLIHLV, LQAFIVLGSVFLVLTGAEALY, WFVLVMPCLILNYFGQGAMLL, MVLLATAATVIASQAVISGAF, IYMPVINWILLVLVICVVLAF, AYGIAVTTTMVITTFLAALVM, PALVTLISLTFLVVDMSFFAA, and IAEGGWFPLLMGGSAFFLLMT.

This sequence belongs to the HAK/KUP transporter (TC 2.A.72) family.

Its subcellular location is the cell inner membrane. It carries out the reaction K(+)(in) + H(+)(in) = K(+)(out) + H(+)(out). Functionally, transport of potassium into the cell. Likely operates as a K(+):H(+) symporter. The protein is Probable potassium transport system protein Kup of Cupriavidus metallidurans (strain ATCC 43123 / DSM 2839 / NBRC 102507 / CH34) (Ralstonia metallidurans).